Reading from the N-terminus, the 430-residue chain is Adenylosuccinate synthetase (430 aa).

GTP is bound by residues 12–18 (GDEGKGK) and 40–42 (GHT). The active-site Proton acceptor is the aspartate 13. Residues aspartate 13 and glycine 40 each coordinate Mg(2+). Residues 13 to 16 (DEGK), 38 to 41 (NAGH), threonine 128, arginine 142, glutamine 223, threonine 238, and arginine 302 each bind IMP. Residue histidine 41 is the Proton donor of the active site. Substrate is bound at residue 298-304 (TTTGRPR). Residues arginine 304, 330–332 (SID), and 412–414 (SVG) each bind GTP.

This sequence belongs to the adenylosuccinate synthetase family. In terms of assembly, homodimer. Requires Mg(2+) as cofactor.

Its subcellular location is the cytoplasm. The catalysed reaction is IMP + L-aspartate + GTP = N(6)-(1,2-dicarboxyethyl)-AMP + GDP + phosphate + 2 H(+). Its pathway is purine metabolism; AMP biosynthesis via de novo pathway; AMP from IMP: step 1/2. Its function is as follows. Plays an important role in the de novo pathway of purine nucleotide biosynthesis. Catalyzes the first committed step in the biosynthesis of AMP from IMP. In Enterococcus faecalis (strain ATCC 700802 / V583), this protein is Adenylosuccinate synthetase.